We begin with the raw amino-acid sequence, 508 residues long: Probable cytosol aminopeptidase (508 aa).

Lys-276 and Asp-281 together coordinate Mn(2+). Lys-288 is a catalytic residue. The Mn(2+) site is built by Asp-299, Asp-358, and Glu-360. The active site involves Arg-362.

This sequence belongs to the peptidase M17 family. Mn(2+) is required as a cofactor.

It is found in the cytoplasm. It carries out the reaction Release of an N-terminal amino acid, Xaa-|-Yaa-, in which Xaa is preferably Leu, but may be other amino acids including Pro although not Arg or Lys, and Yaa may be Pro. Amino acid amides and methyl esters are also readily hydrolyzed, but rates on arylamides are exceedingly low.. The enzyme catalyses Release of an N-terminal amino acid, preferentially leucine, but not glutamic or aspartic acids.. Its function is as follows. Presumably involved in the processing and regular turnover of intracellular proteins. Catalyzes the removal of unsubstituted N-terminal amino acids from various peptides. The sequence is that of Probable cytosol aminopeptidase from Chlorobium luteolum (strain DSM 273 / BCRC 81028 / 2530) (Pelodictyon luteolum).